We begin with the raw amino-acid sequence, 255 residues long: Geranylgeranylglyceryl phosphate synthase (255 aa).

Asp31 and Ser60 together coordinate Mg(2+). Sn-glycerol 1-phosphate is bound by residues 179–185, 211–212, and 233–234; these read YLEAGSG, GG, and GT.

The protein belongs to the GGGP/HepGP synthase family. Group II subfamily. It depends on Mg(2+) as a cofactor.

The protein localises to the cytoplasm. It catalyses the reaction sn-glycerol 1-phosphate + (2E,6E,10E)-geranylgeranyl diphosphate = sn-3-O-(geranylgeranyl)glycerol 1-phosphate + diphosphate. It functions in the pathway membrane lipid metabolism; glycerophospholipid metabolism. Functionally, prenyltransferase that catalyzes the transfer of the geranylgeranyl moiety of geranylgeranyl diphosphate (GGPP) to the C3 hydroxyl of sn-glycerol-1-phosphate (G1P). This reaction is the first ether-bond-formation step in the biosynthesis of archaeal membrane lipids. This is Geranylgeranylglyceryl phosphate synthase from Methanothrix thermoacetophila (strain DSM 6194 / JCM 14653 / NBRC 101360 / PT) (Methanosaeta thermophila).